The primary structure comprises 359 residues: Cytokine receptor-like factor 2 (359 aa).

A signal peptide spans 1–19 (MAWALAVILLPRLLAAAAA). Residues 20–232 (AAAVTSRGDV…PAPSPALAPP (213 aa)) are Extracellular-facing. Asparagine 53 carries N-linked (GlcNAc...) asparagine glycosylation. Residues cysteine 68 and cysteine 82 are joined by a disulfide bond. Positions 119–213 (PPWNVTLLWT…WTAVTRLSGA (95 aa)) constitute a Fibronectin type-III domain. A glycan (N-linked (GlcNAc...) asparagine) is linked at asparagine 122. 2 disulfides stabilise this stretch: cysteine 168-cysteine 169 and cysteine 181-cysteine 219. The short motif at 201–205 (PSEWT) is the WSXWS motif element. A helical membrane pass occupies residues 233-253 (LLPLGCGLAALLTLSLLLAAL). Over 254 to 359 (RLRRVKDALL…MVGDSGYMTL (106 aa)) the chain is Cytoplasmic. The short motif at 262 to 270 (LLPCVPDPS) is the Box 1 motif element. The disordered stretch occupies residues 312–336 (KRVEPEDGTSLCTVPRPPSFEPRGP).

This sequence belongs to the type I cytokine receptor family. Type 5 subfamily. The TSLP receptor is a heterodimer of CRLF2 and IL7R. Binding of TSLP to CRLF2/TSLPR is a mechanistic prerequisite for recruitment of IL7R to the high-affinity ternary complex. In terms of tissue distribution, high level of expression in liver, lung and testis. Also expressed in heart, brain, spleen, thymus and bone marrow. Highly expressed in progenitors and myeloid cells. Isoform 2 is expressed in primary hemotopoietic cells.

It is found in the cell membrane. Its subcellular location is the secreted. Receptor for thymic stromal lymphopoietin (TSLP). Forms a functional complex with TSLP and IL7R which is capable of stimulating cell proliferation through activation of STAT3 and STAT5. Also activates JAK2. Implicated in the development of the hematopoietic system. This Mus musculus (Mouse) protein is Cytokine receptor-like factor 2 (Crlf2).